Here is a 330-residue protein sequence, read N- to C-terminus: Agamous-like MADS-box protein AGL75 (330 aa).

The MADS-box domain occupies 19-61 (TSLSNRLETIFKKASELCTLCDIEACVIYYGPDGELKTWPKEK).

As to quaternary structure, interacts with MEE14/CBP1.

It is found in the nucleus. Its function is as follows. Probable transcription factor that may function in the maintenance of the proper function of the central cell in pollen tube attraction. The polypeptide is Agamous-like MADS-box protein AGL75 (Arabidopsis thaliana (Mouse-ear cress)).